Here is a 135-residue protein sequence, read N- to C-terminus: MRLAFLLLAVSHFICGNALPTNVKSSPVVSPGLIQSFDNAQKPVVMSRKLLRTDERLSEANEERTKLSELFRLDDDEVAAIKELSSMFSAFLQKKSQAFDVYDEIFRSGYPIDTAARISNLYTKYLKDPQAFRGP.

The N-terminal stretch at 1-18 is a signal peptide; the sequence is MRLAFLLLAVSHFICGNA. The RxLR-dEER motif lies at 48–64; it reads RKLLRTDERLSEANEER. Positions 126-135 are NRL1-binding domain; it reads LKDPQAFRGP.

Belongs to the RxLR effector family. In terms of assembly, interacts with host ubiquitin E3 ligase NRL1.

The protein localises to the secreted. The protein resides in the host cytoplasm. Its subcellular location is the host nucleus. It localises to the host nucleoplasm. Its function is as follows. Effector that promotes P.infestans virulence and suppresses pattern-triggered immunity (PTI). Interacts with the host ubiquitin E3 ligase NRL1 and enhances the association between NRL1 and SWAP70 to promote proteasome-mediated degradation of SWAP70, which results in the suppression of immunity. The polypeptide is RxLR effector protein PITG_02860 (Phytophthora infestans (strain T30-4) (Potato late blight agent)).